We begin with the raw amino-acid sequence, 567 residues long: Urease subunit alpha (567 aa).

A Urease domain is found at 128 to 567; sequence GGVDTHVHYI…LPLAQRYHLF (440 aa). Ni(2+) contacts are provided by His-133, His-135, and Lys-216. Residue Lys-216 is modified to N6-carboxylysine. Position 218 (His-218) interacts with substrate. Ni(2+) is bound by residues His-245 and His-271. His-319 acts as the Proton donor in catalysis. A Ni(2+)-binding site is contributed by Asp-359.

This sequence belongs to the metallo-dependent hydrolases superfamily. Urease alpha subunit family. Heterotrimer of UreA (gamma), UreB (beta) and UreC (alpha) subunits. Three heterotrimers associate to form the active enzyme. Ni cation is required as a cofactor. Post-translationally, carboxylation allows a single lysine to coordinate two nickel ions.

It is found in the cytoplasm. The enzyme catalyses urea + 2 H2O + H(+) = hydrogencarbonate + 2 NH4(+). It functions in the pathway nitrogen metabolism; urea degradation; CO(2) and NH(3) from urea (urease route): step 1/1. The sequence is that of Urease subunit alpha from Pseudoalteromonas translucida (strain TAC 125).